Here is a 439-residue protein sequence, read N- to C-terminus: Acyl-coenzyme A thioesterase 9, mitochondrial (439 aa).

The transit peptide at 1–21 (MRRAALRLCALGKGQLTPGRG) directs the protein to the mitochondrion. 2 HotDog ACOT-type domains span residues 84-209 (KDSY…RDSE) and 289-401 (ENSK…EKEV). An N6-acetyllysine modification is found at Lys-103.

This sequence belongs to the acyl coenzyme A hydrolase family. In terms of assembly, interacts with NYAP1, NYAP2 and MYO16.

The protein resides in the mitochondrion. The protein localises to the mitochondrion matrix. It is found in the mitochondrion inner membrane. It catalyses the reaction butanoyl-CoA + H2O = butanoate + CoA + H(+). It carries out the reaction propanoyl-CoA + H2O = propanoate + CoA + H(+). The enzyme catalyses hexadecanoyl-CoA + H2O = hexadecanoate + CoA + H(+). The catalysed reaction is octanoyl-CoA + H2O = octanoate + CoA + H(+). It catalyses the reaction decanoyl-CoA + H2O = decanoate + CoA + H(+). It carries out the reaction tetradecanoyl-CoA + H2O = tetradecanoate + CoA + H(+). The enzyme catalyses 4,8-dimethylnonanoyl-CoA + H2O = 4,8-dimethylnonanoate + CoA + H(+). The catalysed reaction is 3-methylbutanoyl-CoA + H2O = 3-methylbutanoate + CoA + H(+). It catalyses the reaction 2-methylpropanoyl-CoA + H2O = 2-methylpropanoate + CoA + H(+). It participates in lipid metabolism; fatty acid metabolism. Strongly inhibited by NADH and CoA. In terms of biological role, mitochondrial acyl-CoA thioesterase. Catalyzes the hydrolysis of acyl-CoAs into free fatty acids and coenzyme A (CoA), regulating their respective intracellular levels. Regulates both mitochondrial lipid and amino acid metabolism. This is Acyl-coenzyme A thioesterase 9, mitochondrial from Homo sapiens (Human).